Here is a 110-residue protein sequence, read N- to C-terminus: Flagellar hook-basal body complex protein FliE (110 aa).

It belongs to the FliE family.

It localises to the bacterial flagellum basal body. The protein is Flagellar hook-basal body complex protein FliE of Pseudomonas entomophila (strain L48).